Here is a 205-residue protein sequence, read N- to C-terminus: Golgi apparatus membrane protein TVP23 homolog B (205 aa).

At methionine 1 the chain carries N-acetylmethionine. A disordered region spans residues 1–21; it reads MLQQDSNDDTEDVSLFDAEEE. The next 4 helical transmembrane spans lie at 34-53, 54-72, 126-146, and 152-172; these read PVAS…VYLL, CELL…ILLL, IFWL…FSAL, and KWLA…YGYI.

The protein belongs to the TVP23 family.

The protein resides in the membrane. In Pongo abelii (Sumatran orangutan), this protein is Golgi apparatus membrane protein TVP23 homolog B (TVP23B).